The sequence spans 98 residues: Prolactin-releasing peptide (98 aa).

The first 22 residues, 1–22 (MKAVGAWLLCLLLLGLALQGAA), serve as a signal peptide directing secretion. Phe-53 is subject to Phenylalanine amide. A propeptide spanning residues 58-98 (AAPGDGPRPGPRRELACIPLEGGAEPSRALLGRLTAQLVQE) is cleaved from the precursor.

In terms of tissue distribution, more abundantly expressed in the brainstem than the hypothalamus.

It localises to the secreted. Stimulates prolactin (PRL) release and regulates the expression of prolactin through its receptor GPR10. May stimulate lactotrophs directly to secrete PRL. This Ovis aries (Sheep) protein is Prolactin-releasing peptide (PRLH).